Reading from the N-terminus, the 433-residue chain is GTPase Der (433 aa).

EngA-type G domains lie at 3-167 (NIVA…QDTI) and 174-349 (PKIA…TNKT). Residues 9–16 (GRPNVGKS), 56–60 (DTGGY), 119–122 (NKAD), 180–187 (GRPNVGKS), 227–231 (DTAGI), and 292–295 (NKWD) contribute to the GTP site. The KH-like domain occupies 350 to 433 (QKISTAALNQ…VPVQLVFRKK (84 aa)).

Belongs to the TRAFAC class TrmE-Era-EngA-EngB-Septin-like GTPase superfamily. EngA (Der) GTPase family. In terms of assembly, associates with the 50S ribosomal subunit.

Its function is as follows. GTPase that plays an essential role in the late steps of ribosome biogenesis. In Amoebophilus asiaticus (strain 5a2), this protein is GTPase Der.